The sequence spans 181 residues: CASP-like protein 1F1 (181 aa).

Over 1-18 (MPNNEAKFSVNQPLKTQK) the chain is Cytoplasmic. Residues 19–39 (LFIGVQIFFRIVAIAASVASS) form a helical membrane-spanning segment. The Extracellular portion of the chain corresponds to 40–70 (WLMITSKQVIDIGGIVLDARYSYSPEFKFLA). A helical transmembrane segment spans residues 71-91 (FTNIVVGCFSLLSLLFLVLVV). Topologically, residues 92 to 100 (RQGSNPNHY) are cytoplasmic. A helical membrane pass occupies residues 101–121 (FFLFLHDLAMMSLVVGGCAAA). Topologically, residues 122-152 (TTVGFLGKHGNSHTGWMQICDNFGKFCNRAQ) are extracellular. A helical transmembrane segment spans residues 153–173 (TSVTISYLNLICLSILTITSA). At 174–181 (SKSRKMEA) the chain is on the cytoplasmic side.

Belongs to the Casparian strip membrane proteins (CASP) family. Homodimer and heterodimers.

The protein localises to the cell membrane. The sequence is that of CASP-like protein 1F1 from Populus trichocarpa (Western balsam poplar).